Reading from the N-terminus, the 695-residue chain is Segment polarity protein dishevelled homolog DVL-1 (695 aa).

Residues 1-85 (MAETKIIYHM…RVVSWLVLAE (85 aa)) enclose the DIX domain. The interval 89 to 237 (SDAGSQGTDS…LRQADRASSF (149 aa)) is disordered. Residues 142 to 151 (SHRRERARRR) are compositionally biased toward basic residues. Residues 152 to 171 (NREEAARTNGHPRGDRRRDV) show a composition bias toward basic and acidic residues. The span at 176 to 192 (DSASTALSSELESSSFV) shows a compositional bias: low complexity. At S194 the chain carries Phosphoserine. Residues 200 to 214 (TSRLSSSTEQSTSSR) are compositionally biased toward low complexity. The span at 215–228 (LIRKHKRRRRKQRL) shows a compositional bias: basic residues. Residues 251–323 (TVTLNMERHH…NDDAVRVLRE (73 aa)) enclose the PDZ domain. The DEP domain maps to 425-499 (PDSGLEIRDR…SEQCYYVFGD (75 aa)). The interval 543 to 667 (PGPPPCFPPA…PGGPPVRELA (125 aa)) is disordered. Positions 551–580 (PAYQDPGFSYGSGSTGSQQSEGSKSSGSTR) are enriched in low complexity. Residues 625–636 (SRGSSPRSQASA) are compositionally biased toward polar residues.

Belongs to the DSH family. In terms of assembly, interacts with CXXC4. Interacts (via PDZ domain) with NXN. Interacts with BRD7 and INVS. Interacts (via PDZ domain) with VANGL1 and VANGL2 (via C-terminus). Interacts with ARRB1; the interaction is enhanced by phosphorylation of DVL1. Interacts with CYLD. Interacts (via PDZ domain) with RYK. Self-associates (via DIX domain) and forms higher homooligomers. Interacts (via PDZ domain) with DACT1 and FZD7, where DACT1 and FZD7 compete for the same binding site. Interacts (via DEP domain) with MUSK; the interaction is direct and mediates the formation a DVL1, MUSK and PAK1 ternary complex involved in AChR clustering. Interacts (via PDZ domain) with TMEM88. Interacts with DCDC2. Interacts with FOXK2. Interacts with PKD1 (via extracellular domain). Interacts (via PDZ domain) with CCDC88C/DAPLE; competes with CCDC88C for binding to frizzled receptor FZD7 and dissociates from CCDC88C following initiation of non-canonical Wnt signaling when CCDC88C displaces DVL1 from ligand-activated FZD7. Ubiquitinated; undergoes both 'Lys-48'-linked ubiquitination, leading to its subsequent degradation by the ubiquitin-proteasome pathway, and 'Lys-63'-linked ubiquitination. The interaction with INVS is required for ubiquitination. Deubiquitinated by CYLD, which acts on 'Lys-63'-linked ubiquitin chains.

The protein resides in the cell membrane. It localises to the cytoplasm. It is found in the cytosol. The protein localises to the cytoplasmic vesicle. Functionally, participates in Wnt signaling by binding to the cytoplasmic C-terminus of frizzled family members and transducing the Wnt signal to down-stream effectors. Plays a role both in canonical and non-canonical Wnt signaling. Plays a role in the signal transduction pathways mediated by multiple Wnt genes. Required for LEF1 activation upon WNT1 and WNT3A signaling. DVL1 and PAK1 form a ternary complex with MUSK which is important for MUSK-dependent regulation of AChR clustering during the formation of the neuromuscular junction (NMJ). The protein is Segment polarity protein dishevelled homolog DVL-1 (DVL1) of Homo sapiens (Human).